The sequence spans 46 residues: Esculentin-1 (46 aa).

A disulfide bridge links Cys-40 with Cys-46.

In terms of tissue distribution, expressed by the skin glands.

It localises to the secreted. Functionally, antimicrobial peptide. Stimulates insulin release by BRIN-BD11 cells in vitro. In Pelophylax saharicus (Sahara frog), this protein is Esculentin-1.